A 633-amino-acid polypeptide reads, in one-letter code: MDLLSIKDPAFLKNLSNEELESLSAEIRRFLIETLSESGGHIGPNLGVVELTIALHKEFDSPKDKFLWDVGHQSYVHKLLTGRGKDFATLRQHKGLCGFPKRNESEHDVWETGHSSTSLSGAMGMAAARDLKGTNEYIIPIIGDGALTGGMALEALNHIGHEQKDMIVILNDNEMSIAPNVGAIHSMLGRLRTAGKYQWVKDELEYLFKRIPAVGGKLAATAERIKDSLKYLLVSGMFFEELGFTYLGPVDGHSYDELFENLQYAKKTKGPVLLHVITKKGKGYKPAETDKTGTWHGTGPYKIDTGDFVKPKAAAPSWSSLVSETVRKLAREDERIVAITPAMPVGSKLEGFASEFPERMFDVGIAEQHAATMAAGLATQNMKPFLAIYSTFLQRAYDQVVHDICRQNLNVFIGIDRAGLVGADGETHQGVFDIAFLRHIPNLVLMMPKDENEGQHMVNTAVKYDDGPIAMRFPRGNGLGVKMDKELKTIPIGTWEVLRPGTDAVILTFGTTIPMALAAAEELQKEGRSVRVVNARFIKPLDENMLKEILNEGLPILTIEEAVLQGGFGSSILEFAHEHQSYSPIIDRMGIPDQFIEHGSVAKLLEEIGMTKEDVIRRIRLLTPVKTHKGIGS.

Residues His72 and 113–115 contribute to the thiamine diphosphate site; that span reads GHS. Asp144 is a binding site for Mg(2+). Thiamine diphosphate-binding positions include 145–146, Asn173, Tyr284, and Glu367; that span reads GA. Asn173 is a binding site for Mg(2+).

This sequence belongs to the transketolase family. DXPS subfamily. Homodimer. Mg(2+) is required as a cofactor. Thiamine diphosphate serves as cofactor.

It carries out the reaction D-glyceraldehyde 3-phosphate + pyruvate + H(+) = 1-deoxy-D-xylulose 5-phosphate + CO2. It functions in the pathway metabolic intermediate biosynthesis; 1-deoxy-D-xylulose 5-phosphate biosynthesis; 1-deoxy-D-xylulose 5-phosphate from D-glyceraldehyde 3-phosphate and pyruvate: step 1/1. Its function is as follows. Catalyzes the acyloin condensation reaction between C atoms 2 and 3 of pyruvate and glyceraldehyde 3-phosphate to yield 1-deoxy-D-xylulose-5-phosphate (DXP). The polypeptide is 1-deoxy-D-xylulose-5-phosphate synthase (Bacillus licheniformis (strain ATCC 14580 / DSM 13 / JCM 2505 / CCUG 7422 / NBRC 12200 / NCIMB 9375 / NCTC 10341 / NRRL NRS-1264 / Gibson 46)).